Consider the following 252-residue polypeptide: Chitooligosaccharide deacetylase (252 aa).

Residues His-61 and His-125 each contribute to the Mg(2+) site.

Belongs to the YdjC deacetylase family. ChbG subfamily. As to quaternary structure, homodimer. Mg(2+) is required as a cofactor.

It localises to the cytoplasm. The enzyme catalyses N,N'-diacetylchitobiose + H2O = N-acetyl-beta-D-glucosaminyl-(1-&gt;4)-D-glucosamine + acetate. It catalyses the reaction diacetylchitobiose-6'-phosphate + H2O = N'-monoacetylchitobiose-6'-phosphate + acetate. The protein operates within glycan degradation; chitin degradation. Its function is as follows. Involved in the degradation of chitin. ChbG is essential for growth on the acetylated chitooligosaccharides chitobiose and chitotriose but is dispensable for growth on cellobiose and chitosan dimer, the deacetylated form of chitobiose. Deacetylation of chitobiose-6-P and chitotriose-6-P is necessary for both the activation of the chb promoter by the regulatory protein ChbR and the hydrolysis of phosphorylated beta-glucosides by the phospho-beta-glucosidase ChbF. Catalyzes the removal of only one acetyl group from chitobiose-6-P to yield monoacetylchitobiose-6-P, the inducer of ChbR and the substrate of ChbF. The chain is Chitooligosaccharide deacetylase from Salmonella heidelberg (strain SL476).